Here is a 397-residue protein sequence, read N- to C-terminus: Glycine betaine/carnitine transport ATP-binding protein GbuA (397 aa).

An ABC transporter domain is found at 28–264; it reads KSKTDILKET…PANEYVEKFI (237 aa). 60–67 contacts ATP; sequence GLSGSGKS. 2 consecutive CBS domains span residues 279–335 and 340–395; these read MIRP…NITS and LHRD…EVNV.

This sequence belongs to the ABC transporter superfamily. In terms of assembly, the complex is composed of two ATP-binding proteins (GbuA), two transmembrane proteins (GbuB) and a solute-binding protein (GbuC).

It catalyses the reaction a quaternary ammonium(out) + ATP + H2O = a quaternary ammonium(in) + ADP + phosphate + H(+). Its activity is regulated as follows. The complex is activated by an osmotic gradient or by low temperature. Part of the ABC transporter complex GbuABC involved in glycine betaine uptake. Responsible for energy coupling to the transport system. Involved, with BetL and OpuC, in osmoprotection and cryoprotection of Listeria. Can also uptake carnitine when carnitine is abundant in the growth medium. In Listeria monocytogenes serotype 1/2a (strain 10403S), this protein is Glycine betaine/carnitine transport ATP-binding protein GbuA (gbuA).